The sequence spans 454 residues: Caspase-9 (454 aa).

The CARD domain occupies 1–92 (MDEADRQLLR…GTLASLLQSG (92 aa)). At threonine 163 the chain carries Phosphothreonine; by MAPK1. Tyrosine 191 carries the phosphotyrosine; by ABL1 modification. Residues histidine 275 and cysteine 325 contribute to the active site. A phosphoserine mark is found at serine 340 and serine 348. The propeptide occupies 354–367 (AVPYQEGPRPLDQL).

This sequence belongs to the peptidase C14A family. In terms of assembly, heterotetramer that consists of two anti-parallel arranged heterodimers, each one formed by a 35 kDa (p35) and a 10 kDa (p10) subunit. Caspase-9 and APAF1 bind to each other via their respective NH2-terminal CED-3 homologous domains in the presence of cytochrome C and ATP. Interacts (inactive form) with EFHD2. Interacts with HAX1. Interacts with BIRC2/c-IAP1, XIAP/BIRC4, BIRC5/survivin, BIRC6/bruce and BIRC7/livin. Interacts with ABL1 (via SH3 domain); the interaction is direct and increased in the response of cells to genotoxic stress and ABL1/c-Abl activation. Interacts with BCL2L10. In terms of processing, cleavages at Asp-353 by granzyme B and at Asp-368 by caspase-3 generate the two active subunits. Caspase-8 and -10 can also be involved in these processing events. Phosphorylated at Thr-163 by MAPK1/ERK2. Phosphorylation at Thr-163 is sufficient to block caspase-9 processing and subsequent caspase-3 activation. Phosphorylation on Tyr-191 by ABL1/c-Abl; occurs in the response of cells to DNA damage. Post-translationally, ubiquitinated by BIRC6; this activity is inhibited by DIABLO/SMAC.

The enzyme catalyses Strict requirement for an Asp residue at position P1 and with a marked preference for His at position P2. It has a preferred cleavage sequence of Leu-Gly-His-Asp-|-Xaa.. Inhibited by BIRC6; following inhibition of BIRC6-caspase binding by DIABLO/SMAC, BIRC6 is subjected to caspase cleavage, leading to an increase in active caspases. Involved in the activation cascade of caspases responsible for apoptosis execution. Binding of caspase-9 to Apaf-1 leads to activation of the protease which then cleaves and activates effector caspases caspase-3 (CASP3) or caspase-7 (CASP7). Promotes DNA damage-induced apoptosis in a ABL1/c-Abl-dependent manner. Proteolytically cleaves poly(ADP-ribose) polymerase (PARP). Cleaves BIRC6 following inhibition of BIRC6-caspase binding by DIABLO/SMAC. This chain is Caspase-9 (Casp9), found in Mus musculus (Mouse).